The primary structure comprises 218 residues: Tubulin polymerization-promoting protein (218 aa).

A disordered region spans residues 1–45 (MADSKAKPTKAANKTPPKSPGDPAKAAKRLSLESEGANEGAAAAP). The segment at 2-115 (ADSKAKPTKA…SCRTITFEQF (114 aa)) is mediates interaction with LIMK1. Thr-15 carries the post-translational modification Phosphothreonine. Ser-19, Ser-31, and Ser-34 each carry phosphoserine. The span at 33–45 (ESEGANEGAAAAP) shows a compositional bias: low complexity. Residues His-60, His-71, Cys-79, and Cys-82 each contribute to the Zn(2+) site. Thr-91 is subject to Phosphothreonine. A Phosphoserine modification is found at Ser-106. A glycan (O-linked (GlcNAc) serine) is linked at Ser-151. Ser-158 and Ser-159 each carry phosphoserine. The tract at residues 165 to 192 (LTDTSKFTGSHKERFDQSGKGKGKAGRV) is disordered. Basic and acidic residues predominate over residues 174–183 (SHKERFDQSG).

It belongs to the TPPP family. In terms of assembly, homodimer. Binds tubulin; binding is inhibited by GTP. Interacts with MAPK1. Interacts with GAPDH; the interaction is direct. Interacts with LIMK1 (via the PDZ domain); the interaction is direct. Interacts with LIMK2. Interacts with HDAC6; thereby inhibiting the tubulin deacetylase activity of HDAC6. Interacts with aggregated SNCA; may have a pro-aggregatory role in synucleinopathies. Interacts with DYNLL1. Interacts (via C-terminus) with S100A2, S100A6 and S100B; these interactions inhibit TPPP dimerization. Mg(2+) serves as cofactor. Phosphorylated by LIMK1 on serine residues; phosphorylation may alter the tubulin polymerization activity. Phosphorylation by LIMK2, but not LIMK1, regulates astral microtubule organization at early stage of mitosis. Phosphorylation by ROCK1 at Ser-31, Ser-106 and Ser-158 inhibits interaction with HDAC6, resulting in decreased acetylation of tubulin, increased cell motility and entry into S-phase. Phosphorylation by CDK1 inhibits the microtubule polymerizing activity. In terms of processing, degraded by the proteasome; zinc-binding inhibits degradation by the proteasome. As to expression, predominantly expressed in mature oligodendrocytes.

Its subcellular location is the golgi outpost. It localises to the cytoplasm. It is found in the cytoskeleton. The protein resides in the microtubule organizing center. The protein localises to the nucleus. Its subcellular location is the spindle. It carries out the reaction GTP + H2O = GDP + phosphate + H(+). In terms of biological role, regulator of microtubule dynamics that plays a key role in myelination by promoting elongation of the myelin sheath. Acts as a microtubule nucleation factor in oligodendrocytes: specifically localizes to the postsynaptic Golgi apparatus region, also named Golgi outpost, and promotes microtubule nucleation, an important step for elongation of the myelin sheath. Required for both uniform polarized growth of distal microtubules as well as directing the branching of proximal processes. Shows magnesium-dependent GTPase activity; the role of the GTPase activity is unclear. In addition to microtubule nucleation activity, also involved in microtubule bundling and stabilization of existing microtubules, thereby maintaining the integrity of the microtubule network. Regulates microtubule dynamics by promoting tubulin acetylation: acts by inhibiting the tubulin deacetylase activity of HDAC6. Also regulates cell migration: phosphorylation by ROCK1 inhibits interaction with HDAC6, resulting in decreased acetylation of tubulin and increased cell motility. Plays a role in cell proliferation by regulating the G1/S-phase transition. Involved in astral microtubule organization and mitotic spindle orientation during early stage of mitosis; this process is regulated by phosphorylation by LIMK2. This chain is Tubulin polymerization-promoting protein, found in Rattus norvegicus (Rat).